The sequence spans 144 residues: Ribosome maturation factor RimP (144 aa).

The protein belongs to the RimP family.

The protein resides in the cytoplasm. Functionally, required for maturation of 30S ribosomal subunits. This chain is Ribosome maturation factor RimP, found in Azoarcus sp. (strain BH72).